Reading from the N-terminus, the 165-residue chain is Photosystem I assembly protein Ycf3 (165 aa).

TPR repeat units lie at residues 32-65, 69-102, and 117-150; these read AFTYYRDGMSAQSEGNYAEALQNYYEAMRLEIDP, SYILYNIGLIHTSNGEHTKALEYYFRALERNPFL, and GEQAIRQGDSEIAEAWFDQAAEYWKQALTLTPGN.

It belongs to the Ycf3 family.

Its subcellular location is the plastid. The protein localises to the chloroplast thylakoid membrane. In terms of biological role, essential for the assembly of the photosystem I (PSI) complex. May act as a chaperone-like factor to guide the assembly of the PSI subunits. This is Photosystem I assembly protein Ycf3 from Spinacia oleracea (Spinach).